The chain runs to 502 residues: MLSPVNVSIESLNLMTLVPMLIPIIGALFIIVIDLFKSEQDKSLYVMLSLLILGVDFVALVDSAGVFANNGTIMGVFDMMLIDGLAILSQFIIVGASMLFIPLALTHKRFHEFSYPEFFALFLFMIAGFQFMVSTDNLILIFVGLETASLALYTLIAMHNRDKSFEAAVKYFTMGALAAGFFSFGSMVFYALTGSVEINQIATVLTANNYADIGFVLVGVVFLLAAFGFKLSMVPFHTWTPDVYEGSSAALAGYMSIVPKIAAFIVAMRLFEFLIHSGVVWLEVILYMGVVVTMTMANIWALVQSDVKRMLAYSSISHAGFVMAAILIGTTQSNSALFLYWILFSFTNLGSFSMLWISRQKNLPAHQQSDHSYDKFAGMVKTSPVAASIMALFMLSLAGIPPFALFWGKMYLMSSAITGGYTVLALIMALNSAIAGYYYLKLIVYMFMKDPVVENNGHVYSANATLPLKTIIGIAAIGTIFAFVAVNQLIEFVTLFVYNSGY.

14 helical membrane-spanning segments follow: residues 16–36 (TLVPMLIPIIGALFIIVIDLF), 47–67 (MLSLLILGVDFVALVDSAGVF), 85–105 (LAILSQFIIVGASMLFIPLAL), 113–133 (FSYPEFFALFLFMIAGFQFMV), 138–158 (LILIFVGLETASLALYTLIAM), 172–192 (FTMGALAAGFFSFGSMVFYAL), 213–233 (IGFVLVGVVFLLAAFGFKLSM), 248–268 (SAALAGYMSIVPKIAAFIVAM), 273–293 (FLIHSGVVWLEVILYMGVVVT), 310–330 (MLAYSSISHAGFVMAAILIGT), 337–357 (LFLYWILFSFTNLGSFSMLWI), 387–407 (ASIMALFMLSLAGIPPFALFW), 410–430 (MYLMSSAITGGYTVLALIMAL), and 470–490 (TIIGIAAIGTIFAFVAVNQLI).

This sequence belongs to the complex I subunit 2 family. NDH-1 is composed of 14 different subunits. Subunits NuoA, H, J, K, L, M, N constitute the membrane sector of the complex.

Its subcellular location is the cell inner membrane. It catalyses the reaction a quinone + NADH + 5 H(+)(in) = a quinol + NAD(+) + 4 H(+)(out). Its function is as follows. NDH-1 shuttles electrons from NADH, via FMN and iron-sulfur (Fe-S) centers, to quinones in the respiratory chain. The immediate electron acceptor for the enzyme in this species is believed to be ubiquinone. Couples the redox reaction to proton translocation (for every two electrons transferred, four hydrogen ions are translocated across the cytoplasmic membrane), and thus conserves the redox energy in a proton gradient. The polypeptide is NADH-quinone oxidoreductase subunit N (Sulfurimonas denitrificans (strain ATCC 33889 / DSM 1251) (Thiomicrospira denitrificans (strain ATCC 33889 / DSM 1251))).